The chain runs to 567 residues: Proline--tRNA ligase (567 aa).

The protein belongs to the class-II aminoacyl-tRNA synthetase family. ProS type 1 subfamily. As to quaternary structure, homodimer.

Its subcellular location is the cytoplasm. The catalysed reaction is tRNA(Pro) + L-proline + ATP = L-prolyl-tRNA(Pro) + AMP + diphosphate. Catalyzes the attachment of proline to tRNA(Pro) in a two-step reaction: proline is first activated by ATP to form Pro-AMP and then transferred to the acceptor end of tRNA(Pro). As ProRS can inadvertently accommodate and process non-cognate amino acids such as alanine and cysteine, to avoid such errors it has two additional distinct editing activities against alanine. One activity is designated as 'pretransfer' editing and involves the tRNA(Pro)-independent hydrolysis of activated Ala-AMP. The other activity is designated 'posttransfer' editing and involves deacylation of mischarged Ala-tRNA(Pro). The misacylated Cys-tRNA(Pro) is not edited by ProRS. This is Proline--tRNA ligase from Streptomyces coelicolor (strain ATCC BAA-471 / A3(2) / M145).